Consider the following 216-residue polypeptide: Protein Syd (216 aa).

Belongs to the Syd family.

It is found in the cell inner membrane. In terms of biological role, interacts with the SecY protein in vivo. May bind preferentially to an uncomplexed state of SecY, thus functioning either as a chelating agent for excess SecY in the cell or as a regulatory factor that negatively controls the translocase function. This chain is Protein Syd, found in Shewanella baltica (strain OS185).